A 428-amino-acid polypeptide reads, in one-letter code: Spliceosome RNA helicase DDX39B (428 aa).

Over residues 1–19 (MAENDVDNELLDYEDDEVE) the composition is skewed to acidic residues. The interval 1-31 (MAENDVDNELLDYEDDEVETAAGGDGAEAPA) is disordered. A2 bears the N-acetylalanine mark. K36 carries the N6-acetyllysine; alternate modification. A Glycyl lysine isopeptide (Lys-Gly) (interchain with G-Cter in SUMO2); alternate cross-link involves residue K36. A phosphoserine mark is found at S38 and S41. A Q motif motif is present at residues 45 to 73 (SGFRDFLLKPELLRAIVDCGFEHPSEVQH). The region spanning 76-249 (IPQAILGMDV…RKFMQDPMEI (174 aa)) is the Helicase ATP-binding domain. 89 to 96 (AKSGMGKT) is an ATP binding site. At T172 the chain carries Phosphothreonine. The DECD box signature appears at 196 to 199 (DECD). Positions 261-422 (GLQQYYVKLK…ELPDEIDISS (162 aa)) constitute a Helicase C-terminal domain.

Belongs to the DEAD box helicase family. DECD subfamily. Homodimer, and heterodimer with DDX39A. DDX39B interacts with the THO subcomplex to form the THO-DDX39B complex which multimerizes into a 28-subunit tetrameric assembly. Component of the transcription/export (TREX) complex at least composed of ALYREF/THOC4, DDX39B, SARNP/CIP29, CHTOP and the THO subcomplex; in the complex interacts with THOC2. THOC1-THOC2-THOC3-DDX39B subcomplex is sufficient for the interaction with export factor NXF1-NXT1. TREX seems to have a dynamic structure involving ATP-dependent remodeling. Within the TREX complex bridges ALYREF/THOC4 and the THO subcomplex, and, in a ATP-dependent manner, ALYREF/THOC4 and SARNP/CIP29. Component of the spliceosome. Interacts directly with U2AF2. Interacts with RBM8A, RNPS1 and SRRM1, FYTTD1/UIF, THOC1, MX1 and POLDIP3. Interacts with LUZP4. Interacts with SARNP/CIP29 (via the C-terminal domain); the interaction is direct and facilitates RNA binding of DDX39B. As to quaternary structure, (Microbial infection) Interacts with human cytomegalovirus/HHV-5 protein UL69.

It localises to the nucleus. Its subcellular location is the nucleus speckle. The protein resides in the cytoplasm. It catalyses the reaction ATP + H2O = ADP + phosphate + H(+). In terms of biological role, involved in nuclear export of spliced and unspliced mRNA. Component of the TREX complex which is thought to couple mRNA transcription, processing and nuclear export, and specifically associates with spliced mRNA and not with unspliced pre-mRNA. The TREX complex is recruited to spliced mRNAs by a transcription-independent mechanism, binds to mRNA upstream of the exon-junction complex (EJC) and is recruited in a splicing- and cap-dependent manner to a region near the 5' end of the mRNA where it functions in mRNA export to the cytoplasm via the TAP/NXF1 pathway. The THOC1-THOC2-THOC3 core complex alone is sufficient to promote ATPase activity of DDX39B; in the complex THOC2 is the only component that directly interacts with DDX39B. Associates with SARNP/CIP29, which facilitates RNA binding of DDX39B and likely plays a role in mRNA export. May undergo several rounds of ATP hydrolysis during assembly of TREX to drive subsequent loading of components such as ALYREF/THOC4 and CHTOP onto mRNA. Also associates with pre-mRNA independent of ALYREF/THOC4. Involved in the nuclear export of intronless mRNA; the ATP-bound form is proposed to recruit export adapter ALYREF/THOC4 to intronless mRNA; its ATPase activity is cooperatively stimulated by RNA and ALYREF/THOC4 and ATP hydrolysis is thought to trigger the dissociation from RNA to allow the association of ALYREF/THOC4 and the NXF1-NXT1 heterodimer. Involved in transcription elongation and genome stability. Splice factor that is required for the first ATP-dependent step in spliceosome assembly and for the interaction of U2 snRNP with the branchpoint. Has both RNA-stimulated ATP binding/hydrolysis activity and ATP-dependent RNA unwinding activity. Even with the stimulation of RNA, the ATPase activity is weak. Can only hydrolyze ATP but not other NTPs. The RNA stimulation of ATPase activity does not have a strong preference for the sequence and length of the RNA. However, ssRNA stimulates the ATPase activity much more strongly than dsRNA. Can unwind 5' or 3' overhangs or blunt end RNA duplexes in vitro. The ATPase and helicase activities are not influenced by U2AF2; the effect of ALYREF/THOC4 is reported conflictingly with [PubMed:23299939] reporting a stimulatory effect. Functionally, (Microbial infection) The TREX complex is essential for the export of Kaposi's sarcoma-associated herpesvirus (KSHV) intronless mRNAs and infectious virus production. This chain is Spliceosome RNA helicase DDX39B, found in Homo sapiens (Human).